We begin with the raw amino-acid sequence, 1032 residues long: MIRDLGKVGKVSLLLDHIWTGILLYTVILTPADCYNIDESSPMLFKGSPGSLFGFSVVLHSNGEGNWIVVGAPQSSWTTKNVSNPGAILKCKIQQNPNRTCDGLELGNQNGAKCGKTCKEEQDNQWLGVSLSRQPTKDGQILACGHRWKNTHFMLSDHKLPYGVCYGIPADFRTELSKRICPCYKDHVRKFGDRYGSCQAGISTFYVEDVIIMGAPGSFYWTGSIFVYNTTENTIKSYVDLNNAVKFGSYLGYSVGAGHFRTPNGYDVIGGAPQQEQTGRVYIFTYEEKQLTILFEAGGKKLGSYFGAAVCAADLNGDGLSDLLVGAPIQSTIREEGRVFVYMNTGSGAMEELKFELSGSDLYAARFGETIANLGDIDNDGFEDVAIAAPQEGDLEGAVYIYNGREKGITPSFSQRLQGSKFGYGLRMFGQSLSNVLDIDGNGYQDVAIGAFLSDSAVLLRTRPVIIIDAFLKLPSTVNKTKFECMENGVAVVCMNVTVCFAYQGLDVPGYIVMFYNITSDVRRKSGTPARFYFVSNGSSDVISGTVEIRQKSANCKTHQAFMRKDTRDIFTPIHMESSYYLGKHIVSKRSADDFQPLQPVLQQKEGKGNVITNKVYFARYCNLPNCSADLQITGKRSFPKPFESKTYLAVGGMKSLMINITLFNGGDDAFQTVLRLRLPKGLYFVKVFDLLEKEINCAVNKEENEQTRLDCSVGHFYVDAFSKQEFSFLLDSSALIRAEEDLVINATVACANELIQDTMWNNEVSFIVPTRYEIDLNVLGTVSPFSFVFGPREDKPDDSCIMEEIEYTFNVINAGSSLVPAAKLQISLPNTFAPNDIKLFNILAVKTTVGECYFDNSTRDCETPKNTRSKIGDLFAFFSRPDKRWLYCIKDDPSCLQILCLFGDMERESKATVEVQLEISHSHLERDEAMLIQFFTTAQAGFEDSFKIINLNQDHHAYVVLEALHNLKPKKHVIYMIIGISLLLGILLFSLLTYILWKVGFFRRKYQPIGTEETSRRESWNYLNKDEKEVK.

A signal peptide spans Met-1–Cys-34. Over Tyr-35–Val-974 the chain is Extracellular. 7 FG-GAP repeats span residues Asn-36–Thr-100, Lys-113–Ser-177, Asp-186–Ser-237, Tyr-238–Leu-291, Thr-292–Glu-351, Leu-353–Pro-411, and Gln-415–Thr-477. 2 N-linked (GlcNAc...) asparagine glycosylation sites follow: Asn-81 and Asn-98. 3 disulfide bridges follow: Cys-91/Cys-101, Cys-144/Cys-165, and Cys-183/Cys-198. The N-linked (GlcNAc...) asparagine glycan is linked to Asn-229. Positions 314, 316, 318, 320, 322, 376, 378, 380, 384, 438, 440, 442, 444, and 446 each coordinate Ca(2+). Asn-479 carries an N-linked (GlcNAc...) asparagine glycan. Cys-485 and Cys-494 are joined by a disulfide. Asn-496, Asn-517, Asn-537, Asn-626, and Asn-660 each carry an N-linked (GlcNAc...) asparagine glycan. 2 cysteine pairs are disulfide-bonded: Cys-500–Cys-556 and Cys-622–Cys-627. A disulfide bond links Cys-698 and Cys-712. Residues Asn-746 and Asn-857 are each glycosylated (N-linked (GlcNAc...) asparagine). Cystine bridges form between Cys-853/Cys-889 and Cys-896/Cys-901. A helical membrane pass occupies residues Ile-975–Trp-998. Residues Lys-999–Lys-1032 are Cytoplasmic-facing. The GFFKR motif signature appears at Gly-1001–Arg-1005.

It belongs to the integrin alpha chain family. As to quaternary structure, heterodimer of an alpha and a beta subunit.

The protein resides in the membrane. In terms of biological role, fibronectin and V-CAM adhesion receptor. This is Integrin alpha-4 (itga4) from Xenopus laevis (African clawed frog).